The following is a 157-amino-acid chain: Transcriptional repressor NrdR (157 aa).

The segment at 1–26 (MRCPKCGGSKSSVIDSRQAEDGNTIR) is disordered. A zinc finger spans residues 3-34 (CPKCGGSKSSVIDSRQAEDGNTIRRRRECEDC). Residues 17-26 (RQAEDGNTIR) show a composition bias toward basic and acidic residues. Positions 49 to 139 (LVVVKKDGTR…VYRSFKDVGE (91 aa)) constitute an ATP-cone domain.

It belongs to the NrdR family. The cofactor is Zn(2+).

Negatively regulates transcription of bacterial ribonucleotide reductase nrd genes and operons by binding to NrdR-boxes. This Streptococcus gordonii (strain Challis / ATCC 35105 / BCRC 15272 / CH1 / DL1 / V288) protein is Transcriptional repressor NrdR.